The primary structure comprises 277 residues: Energy-coupling factor transporter ATP-binding protein EcfA1 (277 aa).

Residues 4 to 238 (IETKNLNYSY…SELLSKNDLK (235 aa)) enclose the ABC transporter domain. 38–45 (GKNGSGKS) provides a ligand contact to ATP.

This sequence belongs to the ABC transporter superfamily. Energy-coupling factor EcfA family. As to quaternary structure, forms a stable energy-coupling factor (ECF) transporter complex composed of 2 membrane-embedded substrate-binding proteins (S component), 2 ATP-binding proteins (A component) and 2 transmembrane proteins (T component).

The protein resides in the cell membrane. Its function is as follows. ATP-binding (A) component of a common energy-coupling factor (ECF) ABC-transporter complex. Unlike classic ABC transporters this ECF transporter provides the energy necessary to transport a number of different substrates. The protein is Energy-coupling factor transporter ATP-binding protein EcfA1 of Oenococcus oeni (strain ATCC BAA-331 / PSU-1).